Reading from the N-terminus, the 244-residue chain is Mitochondrial import inner membrane translocase subunit Tim21 (244 aa).

The transit peptide at 1 to 18 directs the protein to the mitochondrion; sequence MICAFLRVVQHAEKLHGS. The disordered stretch occupies residues 65–96; that stretch reads TQGPDPRKAKEDSTKQVSIRRNQREETGVSMS. Residues 69–78 are compositionally biased toward basic and acidic residues; it reads DPRKAKEDST. Residues 107–127 form a helical membrane-spanning segment; sequence SYLIVVLFGVGLTGGLLYAIF.

The protein belongs to the TIM21 family. In terms of assembly, component of the TIM23 complex. Component of the MITRAC (mitochondrial translation regulation assembly intermediate of cytochrome c oxidase complex) complex, the core components of this complex being COA3/MITRAC12 and COX14. Interacts with COA3 and MT-CO1/COX1.

The protein resides in the mitochondrion membrane. Participates in the translocation of transit peptide-containing proteins across the mitochondrial inner membrane. Also required for assembly of mitochondrial respiratory chain complex I and complex IV as component of the MITRAC (mitochondrial translation regulation assembly intermediate of cytochrome c oxidase complex) complex. Probably shuttles between the presequence translocase and respiratory-chain assembly intermediates in a process that promotes incorporation of early nuclear-encoded subunits into these complexes. This Mus musculus (Mouse) protein is Mitochondrial import inner membrane translocase subunit Tim21 (Timm21).